The primary structure comprises 313 residues: Transaldolase (313 aa).

Lysine 125 acts as the Schiff-base intermediate with substrate in catalysis.

It belongs to the transaldolase family. Type 1 subfamily. In terms of assembly, homodimer.

Its subcellular location is the cytoplasm. The enzyme catalyses D-sedoheptulose 7-phosphate + D-glyceraldehyde 3-phosphate = D-erythrose 4-phosphate + beta-D-fructose 6-phosphate. It participates in carbohydrate degradation; pentose phosphate pathway; D-glyceraldehyde 3-phosphate and beta-D-fructose 6-phosphate from D-ribose 5-phosphate and D-xylulose 5-phosphate (non-oxidative stage): step 2/3. Functionally, transaldolase is important for the balance of metabolites in the pentose-phosphate pathway. The polypeptide is Transaldolase (Pseudomonas syringae pv. syringae (strain B728a)).